The primary structure comprises 246 residues: Predicted GPI-anchored protein 33 (246 aa).

Residues methionine 1–alanine 16 form the signal peptide. Asparagine 214 is a glycosylation site (N-linked (GlcNAc...) asparagine). Asparagine 219 carries the GPI-anchor amidated asparagine lipid modification. A propeptide spans alanine 220 to isoleucine 246 (removed in mature form).

It localises to the cell membrane. This is Predicted GPI-anchored protein 33 (PGA33) from Candida albicans (strain SC5314 / ATCC MYA-2876) (Yeast).